A 620-amino-acid polypeptide reads, in one-letter code: Translation initiation factor IF-2 (620 aa).

The region spanning 119-288 (ERPPIVTIMG…IILISELENL (170 aa)) is the tr-type G domain. Residues 128–135 (GHVDHGKT) form a G1 region. 128–135 (GHVDHGKT) serves as a coordination point for GTP. Residues 153–157 (GITQA) form a G2 region. Positions 175 to 178 (DTPG) are G3. GTP-binding positions include 175-179 (DTPGH) and 229-232 (NKID). The segment at 229–232 (NKID) is G4. Residues 265-267 (SAI) form a G5 region.

The protein belongs to the TRAFAC class translation factor GTPase superfamily. Classic translation factor GTPase family. IF-2 subfamily.

The protein localises to the cytoplasm. Functionally, one of the essential components for the initiation of protein synthesis. Protects formylmethionyl-tRNA from spontaneous hydrolysis and promotes its binding to the 30S ribosomal subunits. Also involved in the hydrolysis of GTP during the formation of the 70S ribosomal complex. This chain is Translation initiation factor IF-2, found in Mycoplasma capricolum subsp. capricolum (strain California kid / ATCC 27343 / NCTC 10154).